Here is a 189-residue protein sequence, read N- to C-terminus: Parkinson disease protein 7 (189 aa).

Ala2 carries the post-translational modification N-acetylalanine. 2 S-palmitoyl cysteine lipidation sites follow: Cys46 and Cys53. Tyr67 is subject to Phosphotyrosine. Cys106 functions as the Nucleophile in the catalytic mechanism. At Cys106 the chain carries Cysteine sulfinic acid (-SO2H); alternate. Cys106 carries the S-palmitoyl cysteine; alternate lipid modification. The active site involves His126. Lys130 participates in a covalent cross-link: Glycyl lysine isopeptide (Lys-Gly) (interchain with G-Cter in SUMO). Position 148 is an N6-acetyllysine (Lys148). The residue at position 182 (Lys182) is an N6-succinyllysine.

It belongs to the peptidase C56 family. In terms of assembly, homodimer. Binds EFCAB6/DJBP and PIAS2. Part of a ternary complex containing PARK7, EFCAB6/DJBP and AR. Interacts (via N-terminus) with OTUD7B. Interacts with BBS1, HIPK1, CLCF1 and MTERF. Forms a complex with PINK1 and PRKN. Interacts (via C-terminus) with NCF1; the interaction is enhanced by LPS and modulates NCF1 phosphorylation and membrane translocation. Interacts with NENF. Deglycase activity does not require glutathione as a cofactor, however, glycated glutathione constitutes a PARK7 substrate. is required as a cofactor. In terms of processing, sumoylated on Lys-130 by PIAS2 or PIAS4; which is enhanced after ultraviolet irradiation and essential for cell-growth promoting activity and transforming activity. Post-translationally, cys-106 is easily oxidized to sulfinic acid. Undergoes cleavage of a C-terminal peptide and subsequent activation of protease activity in response to oxidative stress. In terms of tissue distribution, highly expressed in pancreas, kidney, skeletal muscle, liver, testis and heart. Detected at slightly lower levels in placenta and brain (at protein level). Detected in astrocytes, Sertoli cells, spermatogonia, spermatids and spermatozoa. Expressed by pancreatic islets at higher levels than surrounding exocrine tissues.

It localises to the cell membrane. The protein resides in the cytoplasm. The protein localises to the nucleus. It is found in the membrane raft. Its subcellular location is the mitochondrion. It localises to the endoplasmic reticulum. The catalysed reaction is N(omega)-(1-hydroxy-2-oxopropyl)-L-arginyl-[protein] + H2O = lactate + L-arginyl-[protein] + H(+). The enzyme catalyses N(6)-(1-hydroxy-2-oxopropyl)-L-lysyl-[protein] + H2O = lactate + L-lysyl-[protein] + H(+). It carries out the reaction S-(1-hydroxy-2-oxopropyl)-L-cysteinyl-[protein] + H2O = lactate + L-cysteinyl-[protein] + H(+). It catalyses the reaction N(omega)-(1-hydroxy-2-oxoethyl)-L-arginyl-[protein] + H2O = L-arginyl-[protein] + glycolate + H(+). The catalysed reaction is N(6)-(1-hydroxy-2-oxoethyl)-L-lysyl-[protein] + H2O = glycolate + L-lysyl-[protein] + H(+). The enzyme catalyses S-(1-hydroxy-2-oxoethyl)-L-cysteinyl-[protein] + H2O = glycolate + L-cysteinyl-[protein] + H(+). It carries out the reaction N(2)-(1-hydroxy-2-oxopropyl)-dGTP + H2O = lactate + dGTP + H(+). It catalyses the reaction N(2)-(1-hydroxy-2-oxopropyl)-GTP + H2O = lactate + GTP + H(+). The catalysed reaction is N(2)-(1-hydroxy-2-oxopropyl)-GDP + H2O = lactate + GDP + H(+). The enzyme catalyses N(2)-(1-hydroxy-2-oxopropyl)-GMP + H2O = lactate + GMP + H(+). It carries out the reaction N(2)-(1-hydroxy-2-oxoethyl)-dGTP + H2O = dGTP + glycolate + H(+). It catalyses the reaction N(2)-(1-hydroxy-2-oxoethyl)-GTP + H2O = glycolate + GTP + H(+). The catalysed reaction is N(2)-(1-hydroxy-2-oxoethyl)-GDP + H2O = glycolate + GDP + H(+). The enzyme catalyses N(2)-(1-hydroxy-2-oxoethyl)-GMP + H2O = glycolate + GMP + H(+). It carries out the reaction an N(2)-(1-hydroxy-2-oxopropyl)-guanosine in RNA + H2O = a guanosine in RNA + lactate + H(+). It catalyses the reaction an N(2)-(1-hydroxy-2-oxopropyl)-2'-deoxyguanosine in DNA + H2O = a 2'-deoxyguanosine in DNA + lactate + H(+). The catalysed reaction is an N(2)-(1-hydroxy-2-oxoethyl)-guanosine in RNA + H2O = a guanosine in RNA + glycolate + H(+). The enzyme catalyses an N(2)-(1-hydroxy-2-oxoethyl)-2'-deoxyguanosine in DNA + H2O = a 2'-deoxyguanosine in DNA + glycolate + H(+). Functionally, multifunctional protein with controversial molecular function which plays an important role in cell protection against oxidative stress and cell death acting as oxidative stress sensor and redox-sensitive chaperone and protease. It is involved in neuroprotective mechanisms like the stabilization of NFE2L2 and PINK1 proteins, male fertility as a positive regulator of androgen signaling pathway as well as cell growth and transformation through, for instance, the modulation of NF-kappa-B signaling pathway. Has been described as a protein and nucleotide deglycase that catalyzes the deglycation of the Maillard adducts formed between amino groups of proteins or nucleotides and reactive carbonyl groups of glyoxals. But this function is rebuted by other works. As a protein deglycase, repairs methylglyoxal- and glyoxal-glycated proteins, and releases repaired proteins and lactate or glycolate, respectively. Deglycates cysteine, arginine and lysine residues in proteins, and thus reactivates these proteins by reversing glycation by glyoxals. Acts on early glycation intermediates (hemithioacetals and aminocarbinols), preventing the formation of advanced glycation endproducts (AGE) that cause irreversible damage. Also functions as a nucleotide deglycase able to repair glycated guanine in the free nucleotide pool (GTP, GDP, GMP, dGTP) and in DNA and RNA. Is thus involved in a major nucleotide repair system named guanine glycation repair (GG repair), dedicated to reversing methylglyoxal and glyoxal damage via nucleotide sanitization and direct nucleic acid repair. Protects histones from adduction by methylglyoxal, controls the levels of methylglyoxal-derived argininine modifications on chromatin. Able to remove the glycations and restore histone 3, histone glycation disrupts both local and global chromatin architecture by altering histone-DNA interactions as well as histone acetylation and ubiquitination levels. Displays a very low glyoxalase activity that may reflect its deglycase activity. Eliminates hydrogen peroxide and protects cells against hydrogen peroxide-induced cell death. Required for correct mitochondrial morphology and function as well as for autophagy of dysfunctional mitochondria. Plays a role in regulating expression or stability of the mitochondrial uncoupling proteins SLC25A14 and SLC25A27 in dopaminergic neurons of the substantia nigra pars compacta and attenuates the oxidative stress induced by calcium entry into the neurons via L-type channels during pacemaking. Regulates astrocyte inflammatory responses, may modulate lipid rafts-dependent endocytosis in astrocytes and neuronal cells. In pancreatic islets, involved in the maintenance of mitochondrial reactive oxygen species (ROS) levels and glucose homeostasis in an age- and diet dependent manner. Protects pancreatic beta cells from cell death induced by inflammatory and cytotoxic setting. Binds to a number of mRNAs containing multiple copies of GG or CC motifs and partially inhibits their translation but dissociates following oxidative stress. Metal-binding protein able to bind copper as well as toxic mercury ions, enhances the cell protection mechanism against induced metal toxicity. In macrophages, interacts with the NADPH oxidase subunit NCF1 to direct NADPH oxidase-dependent ROS production, and protects against sepsis. The sequence is that of Parkinson disease protein 7 from Homo sapiens (Human).